A 157-amino-acid chain; its full sequence is S-ribosylhomocysteine lyase (157 aa).

His54, His58, and Cys124 together coordinate Fe cation.

It belongs to the LuxS family. In terms of assembly, homodimer. Fe cation is required as a cofactor.

It carries out the reaction S-(5-deoxy-D-ribos-5-yl)-L-homocysteine = (S)-4,5-dihydroxypentane-2,3-dione + L-homocysteine. Involved in the synthesis of autoinducer 2 (AI-2) which is secreted by bacteria and is used to communicate both the cell density and the metabolic potential of the environment. The regulation of gene expression in response to changes in cell density is called quorum sensing. Catalyzes the transformation of S-ribosylhomocysteine (RHC) to homocysteine (HC) and 4,5-dihydroxy-2,3-pentadione (DPD). The chain is S-ribosylhomocysteine lyase from Pediococcus pentosaceus (strain ATCC 25745 / CCUG 21536 / LMG 10740 / 183-1w).